A 315-amino-acid chain; its full sequence is Energy-coupling factor transporter ATP-binding protein EcfA2 (315 aa).

The region spanning 31–275 (IILDNVSYTY…QELLSKIQIE (245 aa)) is the ABC transporter domain. 68 to 75 (GTTGSGKS) contributes to the ATP binding site.

Belongs to the ABC transporter superfamily. Energy-coupling factor EcfA family. Forms a stable energy-coupling factor (ECF) transporter complex composed of 2 membrane-embedded substrate-binding proteins (S component), 2 ATP-binding proteins (A component) and 2 transmembrane proteins (T component).

It is found in the cell membrane. Its function is as follows. ATP-binding (A) component of a common energy-coupling factor (ECF) ABC-transporter complex. Unlike classic ABC transporters this ECF transporter provides the energy necessary to transport a number of different substrates. The sequence is that of Energy-coupling factor transporter ATP-binding protein EcfA2 from Mesoplasma florum (strain ATCC 33453 / NBRC 100688 / NCTC 11704 / L1) (Acholeplasma florum).